Consider the following 401-residue polypeptide: Probable aspartic-type endopeptidase TRV_05382 (401 aa).

Positions 1–22 (MWHSPFFTAFTLFLGFFTLTLA) are cleaved as a signal peptide. 2 N-linked (GlcNAc...) asparagine glycosylation sites follow: Asn80 and Asn102. Residues 94-398 (FVNEITIGNN…DHDGPKMGFA (305 aa)) form the Peptidase A1 domain. The active site involves Asp110. N-linked (GlcNAc...) asparagine glycosylation occurs at Asn282. Residue Asp292 is part of the active site. Residue Asn329 is glycosylated (N-linked (GlcNAc...) asparagine).

This sequence belongs to the peptidase A1 family.

It localises to the secreted. Its function is as follows. Probable aspartic-type endopeptidase which contributes to virulence. This chain is Probable aspartic-type endopeptidase TRV_05382, found in Trichophyton verrucosum (strain HKI 0517).